A 601-amino-acid polypeptide reads, in one-letter code: tRNA 5-methylaminomethyl-2-thiouridine biosynthesis bifunctional protein MnmC (601 aa).

The segment at 1–237 (MSDPTASPLI…KKQRLEAVAP (237 aa)) is tRNA (mnm(5)s(2)U34)-methyltransferase. The FAD-dependent cmnm(5)s(2)U34 oxidoreductase stretch occupies residues 252–601 (IGGGIAGAAM…FSSRVATGAV (350 aa)).

In the N-terminal section; belongs to the methyltransferase superfamily. tRNA (mnm(5)s(2)U34)-methyltransferase family. This sequence in the C-terminal section; belongs to the DAO family. It depends on FAD as a cofactor.

The protein localises to the cytoplasm. It carries out the reaction 5-aminomethyl-2-thiouridine(34) in tRNA + S-adenosyl-L-methionine = 5-methylaminomethyl-2-thiouridine(34) in tRNA + S-adenosyl-L-homocysteine + H(+). Catalyzes the last two steps in the biosynthesis of 5-methylaminomethyl-2-thiouridine (mnm(5)s(2)U) at the wobble position (U34) in tRNA. Catalyzes the FAD-dependent demodification of cmnm(5)s(2)U34 to nm(5)s(2)U34, followed by the transfer of a methyl group from S-adenosyl-L-methionine to nm(5)s(2)U34, to form mnm(5)s(2)U34. This Caulobacter sp. (strain K31) protein is tRNA 5-methylaminomethyl-2-thiouridine biosynthesis bifunctional protein MnmC.